We begin with the raw amino-acid sequence, 154 residues long: Ribonuclease H (154 aa).

The 142-residue stretch at 1-142 (MKQVDIFTDG…CDTIARGHAS (142 aa)) folds into the RNase H type-1 domain. Mg(2+) is bound by residues D9, E47, D69, and D134.

The protein belongs to the RNase H family. As to quaternary structure, monomer. Mg(2+) is required as a cofactor.

It is found in the cytoplasm. It carries out the reaction Endonucleolytic cleavage to 5'-phosphomonoester.. Functionally, endonuclease that specifically degrades the RNA of RNA-DNA hybrids. This chain is Ribonuclease H, found in Oleidesulfovibrio alaskensis (strain ATCC BAA-1058 / DSM 17464 / G20) (Desulfovibrio alaskensis).